The chain runs to 406 residues: Argininosuccinate synthase (406 aa).

ATP is bound by residues 11–19 (AYSGGLDTS) and Ala38. L-citrulline contacts are provided by Tyr91 and Ser96. Residue Gly121 coordinates ATP. Thr123, Asn127, and Asp128 together coordinate L-aspartate. An L-citrulline-binding site is contributed by Asn127. Arg131, Ser181, Ser190, Glu266, and Tyr278 together coordinate L-citrulline.

Belongs to the argininosuccinate synthase family. Type 1 subfamily. As to quaternary structure, homotetramer.

It is found in the cytoplasm. The enzyme catalyses L-citrulline + L-aspartate + ATP = 2-(N(omega)-L-arginino)succinate + AMP + diphosphate + H(+). The protein operates within amino-acid biosynthesis; L-arginine biosynthesis; L-arginine from L-ornithine and carbamoyl phosphate: step 2/3. This Campylobacter jejuni subsp. doylei (strain ATCC BAA-1458 / RM4099 / 269.97) protein is Argininosuccinate synthase.